A 201-amino-acid chain; its full sequence is ATP synthase subunit b 2 (201 aa).

Polar residues predominate over residues 1–17; the sequence is MAEQKNPLTTPSPNADT. Residues 1 to 39 are disordered; the sequence is MAEQKNPLTTPSPNADTTIVPAGSPHTHTEQPSGGHGGA. Residues 47–66 form a helical membrane-spanning segment; sequence TFLSQLIWLALAFGLLYYLM.

It belongs to the ATPase B chain family. As to quaternary structure, F-type ATPases have 2 components, F(1) - the catalytic core - and F(0) - the membrane proton channel. F(1) has five subunits: alpha(3), beta(3), gamma(1), delta(1), epsilon(1). F(0) has three main subunits: a(1), b(2) and c(10-14). The alpha and beta chains form an alternating ring which encloses part of the gamma chain. F(1) is attached to F(0) by a central stalk formed by the gamma and epsilon chains, while a peripheral stalk is formed by the delta and b chains.

The protein resides in the cell inner membrane. In terms of biological role, f(1)F(0) ATP synthase produces ATP from ADP in the presence of a proton or sodium gradient. F-type ATPases consist of two structural domains, F(1) containing the extramembraneous catalytic core and F(0) containing the membrane proton channel, linked together by a central stalk and a peripheral stalk. During catalysis, ATP synthesis in the catalytic domain of F(1) is coupled via a rotary mechanism of the central stalk subunits to proton translocation. Its function is as follows. Component of the F(0) channel, it forms part of the peripheral stalk, linking F(1) to F(0). The b'-subunit is a diverged and duplicated form of b found in plants and photosynthetic bacteria. In Methylorubrum extorquens (strain PA1) (Methylobacterium extorquens), this protein is ATP synthase subunit b 2 (atpF2).